The sequence spans 396 residues: Serine/threonine-protein kinase VRK1 (396 aa).

Residues 37–317 enclose the Protein kinase domain; sequence WKVGLPIGQG…LLDYTEKPLY (281 aa). ATP-binding positions include 43–51 and Lys-71; that span reads IGQGGFGCI. A Glycyl lysine isopeptide (Lys-Gly) (interchain with G-Cter in SUMO2) cross-link involves residue Lys-71. Asp-177 acts as the Proton acceptor in catalysis. Ser-342 carries the post-translational modification Phosphoserine; by PLK3. Positions 354–396 are disordered; the sequence is ITKKRKKEIEESKEPGVEDTEWSNTQTEEAIQTRSRTRKRVQK. The residue at position 355 (Thr-355) is a Phosphothreonine; by autocatalysis. Positions 360-369 are enriched in basic and acidic residues; it reads KEIEESKEPG. Residues 375 to 387 show a composition bias toward polar residues; it reads WSNTQTEEAIQTR. Ser-376 bears the Phosphoserine mark. Thr-378 carries the phosphothreonine modification. Residues 387 to 393 are required for interaction with the nucleosome; sequence RSRTRKR.

Belongs to the protein kinase superfamily. CK1 Ser/Thr protein kinase family. VRK subfamily. As to quaternary structure, interacts with HDAC1, KAT2B, SETDB1, KDM3A and KDM4A. Associates with the nucleosome through interactions with nucleosome DNA, histone H2A and histone H2B; the interaction with H2A and H2B is mediated by the nucleosome acidic patch, a cluster of negatively charged residues of H2A and H2B forming a cleft within the nucleosome core. In terms of assembly, (Microbial infection) Interacts with vaccinia protein B12; this interaction inhibits the repressive activity of the vaccinia virus B12 pseudokinase on viral replication factory formation. Post-translationally, autophosphorylated at various serine and threonine residues. Autophosphorylation does not impair its ability to phosphorylate p53/TP53. Phosphorylation by PLK3 leads to induction of Golgi fragmentation during mitosis. In terms of tissue distribution, widely expressed. Highly expressed in fetal liver, testis and thymus.

It is found in the nucleus. The protein localises to the cytoplasm. It localises to the cajal body. It catalyses the reaction L-seryl-[protein] + ATP = O-phospho-L-seryl-[protein] + ADP + H(+). The enzyme catalyses L-threonyl-[protein] + ATP = O-phospho-L-threonyl-[protein] + ADP + H(+). Active in presence of Mn(2+), Mg(2+) and Zn(2+), but is not functional with Ca(2+) or Cu(2+). Has a higher affinity for Mn(2+) than for Mg(2+). RAN inhibits its autophosphorylation and its ability to phosphorylate histone H3. Its function is as follows. Serine/threonine kinase involved in the regulation of key cellular processes including the cell cycle, nuclear condensation, transcription regulation, and DNA damage response. Controls chromatin organization and remodeling by mediating phosphorylation of histone H3 on 'Thr-4' and histone H2AX (H2aXT4ph). It also phosphorylates KAT5 in response to DNA damage, promoting KAT5 association with chromatin and histone acetyltransferase activity. Is involved in the regulation of cell cycle progression of neural progenitors, and is required for proper cortical neuronal migration. Is involved in neurite elongation and branching in motor neurons, and has an essential role in Cajal bodies assembly, acting through COIL phosphorylation and the control of coilin degradation. Involved in Golgi disassembly during the cell cycle: following phosphorylation by PLK3 during mitosis, it is required to induce Golgi fragmentation. Phosphorylates BANF1: disrupts its ability to bind DNA, reduces its binding to LEM domain-containing proteins and causes its relocalization from the nucleus to the cytoplasm. Phosphorylates TP53BP1 and p53/TP53 on 'Thr-18', preventing the interaction between p53/TP53 and MDM2. Phosphorylates ATF2 which activates its transcriptional activity. Phosphorylates JUN. This is Serine/threonine-protein kinase VRK1 from Homo sapiens (Human).